Reading from the N-terminus, the 280-residue chain is Hydroxyethylthiazole kinase (280 aa).

A substrate-binding site is contributed by methionine 50. Positions 125 and 178 each coordinate ATP. Residue glycine 205 coordinates substrate.

This sequence belongs to the Thz kinase family. Mg(2+) is required as a cofactor.

It catalyses the reaction 5-(2-hydroxyethyl)-4-methylthiazole + ATP = 4-methyl-5-(2-phosphooxyethyl)-thiazole + ADP + H(+). Its pathway is cofactor biosynthesis; thiamine diphosphate biosynthesis; 4-methyl-5-(2-phosphoethyl)-thiazole from 5-(2-hydroxyethyl)-4-methylthiazole: step 1/1. Functionally, catalyzes the phosphorylation of the hydroxyl group of 4-methyl-5-beta-hydroxyethylthiazole (THZ). In Lacticaseibacillus paracasei (strain ATCC 334 / BCRC 17002 / CCUG 31169 / CIP 107868 / KCTC 3260 / NRRL B-441) (Lactobacillus paracasei), this protein is Hydroxyethylthiazole kinase.